We begin with the raw amino-acid sequence, 452 residues long: Protein MLF3 (452 aa).

Phosphoserine is present on residues serine 8, serine 11, serine 14, serine 56, serine 74, and serine 79. Residues 61-94 (SGSEVRTPSLRKNSNNVSSPLDNVIPTSRSASNS) are disordered. The span at 64 to 81 (EVRTPSLRKNSNNVSSPL) shows a compositional bias: polar residues. The residue at position 121 (threonine 121) is a Phosphothreonine. Phosphoserine occurs at positions 145, 156, and 160. Threonine 169 carries the post-translational modification Phosphothreonine. At serine 171 the chain carries Phosphoserine. The segment covering 171-182 (SATLPSSESSPA) has biased composition (polar residues). Positions 171-220 (SATLPSSESSPASPDLKLSRSHSHSAATRPTLNNINNTGMTTTTSNGEPN) are disordered. Phosphothreonine is present on threonine 173. Phosphoserine is present on residues serine 183 and serine 189. Residues 201–216 (TLNNINNTGMTTTTSN) are compositionally biased toward low complexity. Tyrosine 227 is modified (phosphotyrosine). Phosphoserine is present on residues serine 228, serine 257, and serine 265. Disordered regions lie at residues 290–321 (PATS…NRSS) and 348–402 (IESS…AIGK). Tyrosine 295 carries the post-translational modification Phosphotyrosine. 3 positions are modified to phosphoserine: serine 297, serine 320, and serine 353. Over residues 299-321 (QQSARQYSNNANNNAKSPKNRSS) the composition is skewed to low complexity. Residues 365–383 (PSFPLSSSLRSSANLASNP) show a composition bias toward low complexity. Polar residues predominate over residues 384–398 (ELATQTPLSTSSSYT). Serine 439 carries the phosphoserine modification.

It to yeast VHS2.

It localises to the cytoplasm. This is Protein MLF3 (MLF3) from Saccharomyces cerevisiae (strain ATCC 204508 / S288c) (Baker's yeast).